The sequence spans 232 residues: Large ribosomal subunit protein uL1 (232 aa).

This sequence belongs to the universal ribosomal protein uL1 family. Part of the 50S ribosomal subunit.

In terms of biological role, binds directly to 23S rRNA. The L1 stalk is quite mobile in the ribosome, and is involved in E site tRNA release. Protein L1 is also a translational repressor protein, it controls the translation of the L11 operon by binding to its mRNA. This chain is Large ribosomal subunit protein uL1, found in Coxiella burnetii (strain RSA 331 / Henzerling II).